The sequence spans 452 residues: Probable ECA polymerase (452 aa).

The next 11 membrane-spanning stretches (helical) occupy residues 6-26 (FSGL…LTWF), 37-57 (VFFS…TSVL), 63-83 (VGVA…CFYG), 118-138 (VILM…NGFL), 155-175 (GVAL…VYFL), 181-201 (AWLF…MIVG), 207-227 (IIIA…ISLW), 228-248 (MLVA…LKRY), 341-361 (LVVM…GLII), 378-398 (YKAA…IVLA), and 410-430 (VFFL…FWLF).

It belongs to the WzyE family. Probably part of a complex composed of WzxE, WzyE and WzzE.

It localises to the cell inner membrane. It functions in the pathway bacterial outer membrane biogenesis; enterobacterial common antigen biosynthesis. Its function is as follows. Probably involved in the polymerization of enterobacterial common antigen (ECA) trisaccharide repeat units. The polypeptide is Probable ECA polymerase (Salmonella agona (strain SL483)).